The following is a 208-amino-acid chain: FMN-dependent NADH:quinone oxidoreductase (208 aa).

Residues S9 and S15–S17 each bind FMN.

Belongs to the azoreductase type 1 family. As to quaternary structure, homodimer. FMN serves as cofactor.

The enzyme catalyses 2 a quinone + NADH + H(+) = 2 a 1,4-benzosemiquinone + NAD(+). It carries out the reaction N,N-dimethyl-1,4-phenylenediamine + anthranilate + 2 NAD(+) = 2-(4-dimethylaminophenyl)diazenylbenzoate + 2 NADH + 2 H(+). Quinone reductase that provides resistance to thiol-specific stress caused by electrophilic quinones. Functionally, also exhibits azoreductase activity. Catalyzes the reductive cleavage of the azo bond in aromatic azo compounds to the corresponding amines. The sequence is that of FMN-dependent NADH:quinone oxidoreductase from Bordetella petrii (strain ATCC BAA-461 / DSM 12804 / CCUG 43448).